Here is an 83-residue protein sequence, read N- to C-terminus: Cytochrome b559 subunit alpha (83 aa).

The chain crosses the membrane as a helical span at residues 21–35 (VIHSITIPSLFIAGW). Residue His23 participates in heme binding.

The protein belongs to the PsbE/PsbF family. As to quaternary structure, heterodimer of an alpha subunit and a beta subunit. PSII is composed of 1 copy each of membrane proteins PsbA, PsbB, PsbC, PsbD, PsbE, PsbF, PsbH, PsbI, PsbJ, PsbK, PsbL, PsbM, PsbT, PsbX, PsbY, PsbZ, Psb30/Ycf12, at least 3 peripheral proteins of the oxygen-evolving complex and a large number of cofactors. It forms dimeric complexes. Heme b serves as cofactor.

It localises to the plastid. The protein localises to the chloroplast thylakoid membrane. In terms of biological role, this b-type cytochrome is tightly associated with the reaction center of photosystem II (PSII). PSII is a light-driven water:plastoquinone oxidoreductase that uses light energy to abstract electrons from H(2)O, generating O(2) and a proton gradient subsequently used for ATP formation. It consists of a core antenna complex that captures photons, and an electron transfer chain that converts photonic excitation into a charge separation. The polypeptide is Cytochrome b559 subunit alpha (Amborella trichopoda).